A 289-amino-acid chain; its full sequence is ATP synthase gamma chain (289 aa).

The protein belongs to the ATPase gamma chain family. As to quaternary structure, F-type ATPases have 2 components, CF(1) - the catalytic core - and CF(0) - the membrane proton channel. CF(1) has five subunits: alpha(3), beta(3), gamma(1), delta(1), epsilon(1). CF(0) has three main subunits: a, b and c.

The protein resides in the cell inner membrane. In terms of biological role, produces ATP from ADP in the presence of a proton gradient across the membrane. The gamma chain is believed to be important in regulating ATPase activity and the flow of protons through the CF(0) complex. The protein is ATP synthase gamma chain of Azobacteroides pseudotrichonymphae genomovar. CFP2.